Reading from the N-terminus, the 254-residue chain is 4-hydroxy-tetrahydrodipicolinate reductase (254 aa).

NAD(+) is bound by residues 8 to 13 (GGSGRV), 87 to 89 (GTT), and 111 to 114 (ATNM). H143 functions as the Proton donor/acceptor in the catalytic mechanism. Residue H144 coordinates (S)-2,3,4,5-tetrahydrodipicolinate. K147 (proton donor) is an active-site residue. 153–154 (GT) lines the (S)-2,3,4,5-tetrahydrodipicolinate pocket.

The protein belongs to the DapB family.

The protein localises to the cytoplasm. It catalyses the reaction (S)-2,3,4,5-tetrahydrodipicolinate + NAD(+) + H2O = (2S,4S)-4-hydroxy-2,3,4,5-tetrahydrodipicolinate + NADH + H(+). The enzyme catalyses (S)-2,3,4,5-tetrahydrodipicolinate + NADP(+) + H2O = (2S,4S)-4-hydroxy-2,3,4,5-tetrahydrodipicolinate + NADPH + H(+). It participates in amino-acid biosynthesis; L-lysine biosynthesis via DAP pathway; (S)-tetrahydrodipicolinate from L-aspartate: step 4/4. Catalyzes the conversion of 4-hydroxy-tetrahydrodipicolinate (HTPA) to tetrahydrodipicolinate. This is 4-hydroxy-tetrahydrodipicolinate reductase from Nitratiruptor sp. (strain SB155-2).